The chain runs to 208 residues: MRLIRTLFVAALAMGASLAHADDSAAVQRLTGLLNKAQTLTARFSQLTLDGSGTRLQETAGQLSLKRPGLFRWHTDAPNEQLLISNGEKVWLYDPDLEQVTIQKLDQRLTQTPALLLSGDISKISESFAITYKEGGNVVDFVLKPKTKDTLFDTLRLSFRSGKVNDMQMIDGVGQRTNILFFDVKMNEALDAKQFTFDVPPGVDVIQE.

Positions 1 to 21 are cleaved as a signal peptide; that stretch reads MRLIRTLFVAALAMGASLAHA.

Belongs to the LolA family. In terms of assembly, monomer.

It is found in the periplasm. Its function is as follows. Participates in the translocation of lipoproteins from the inner membrane to the outer membrane. Only forms a complex with a lipoprotein if the residue after the N-terminal Cys is not an aspartate (The Asp acts as a targeting signal to indicate that the lipoprotein should stay in the inner membrane). This Pseudomonas aeruginosa (strain UCBPP-PA14) protein is Outer-membrane lipoprotein carrier protein.